The sequence spans 170 residues: Large ribosomal subunit protein uL22c (170 aa).

It belongs to the universal ribosomal protein uL22 family. Part of the 50S ribosomal subunit.

It is found in the plastid. It localises to the chloroplast. Its function is as follows. This protein binds specifically to 23S rRNA. Functionally, the globular domain of the protein is located near the polypeptide exit tunnel on the outside of the subunit, while an extended beta-hairpin is found that lines the wall of the exit tunnel in the center of the 70S ribosome. The sequence is that of Large ribosomal subunit protein uL22c (rpl22) from Nandina domestica (Heavenly bamboo).